The primary structure comprises 243 residues: Transmembrane protein 174 (243 aa).

2 helical membrane passes run 40 to 60 (LLFS…MGWI) and 73 to 93 (LLGP…VCKF).

As to quaternary structure, interacts with SLC34A1; regulates SLC34A1 internalization by PTH and FGF23.

The protein localises to the endoplasmic reticulum membrane. It localises to the apical cell membrane. Regulator of plasma phosphate homeostasis. Decreases serum inorganic phosphate (Pi) uptake by regulating the sodium-phosphate cotransporter SLC34A1 trafficking by PTH and FGF23 in the kidney. The polypeptide is Transmembrane protein 174 (TMEM174) (Pongo abelii (Sumatran orangutan)).